The following is a 410-amino-acid chain: 2-oxoisovalerate dehydrogenase subunit alpha (410 aa).

It belongs to the BCKDHA family. In terms of assembly, heterodimer of an alpha and a beta chain. It depends on thiamine diphosphate as a cofactor.

It carries out the reaction N(6)-[(R)-lipoyl]-L-lysyl-[protein] + 3-methyl-2-oxobutanoate + H(+) = N(6)-[(R)-S(8)-2-methylpropanoyldihydrolipoyl]-L-lysyl-[protein] + CO2. In terms of biological role, the branched-chain alpha-keto dehydrogenase complex catalyzes the overall conversion of alpha-keto acids to acyl-CoA and CO(2). It contains multiple copies of three enzymatic components: branched-chain alpha-keto acid decarboxylase (E1), lipoamide acyltransferase (E2) and lipoamide dehydrogenase (E3). The chain is 2-oxoisovalerate dehydrogenase subunit alpha (bkdA1) from Pseudomonas putida (Arthrobacter siderocapsulatus).